Here is a 184-residue protein sequence, read N- to C-terminus: Inorganic pyrophosphatase (184 aa).

Positions 19, 33, and 45 each coordinate substrate. Mg(2+) is bound by residues Asp-55, Asp-60, and Asp-92. Tyr-129 serves as a coordination point for substrate.

The protein belongs to the PPase family. Homohexamer. Mg(2+) is required as a cofactor.

Its subcellular location is the cytoplasm. It catalyses the reaction diphosphate + H2O = 2 phosphate + H(+). Functionally, catalyzes the hydrolysis of inorganic pyrophosphate (PPi) forming two phosphate ions. This is Inorganic pyrophosphatase from Mycoplasma genitalium (strain ATCC 33530 / DSM 19775 / NCTC 10195 / G37) (Mycoplasmoides genitalium).